Here is a 590-residue protein sequence, read N- to C-terminus: DEAD-box ATP-dependent RNA helicase 27 (590 aa).

Residues 1–92 form a disordered region; it reads MAPAPATTSS…EKGNEGGSGI (92 aa). The span at 27–62 shows a compositional bias: acidic residues; it reads SDSESEELSYDTAAADEEEGEEEAPNQMEELEEEQE. Residues 40–87 are a coiled coil; sequence AADEEEGEEEAPNQMEELEEEQEEEKKEKKQKKEMSKEKKRKKEKGNE. Residues 63-76 are compositionally biased toward basic and acidic residues; sequence EEKKEKKQKKEMSK. The Q motif motif lies at 96–124; sequence MLFSELGVSEPTARAIREMNYTYLTQIQA. Residues 127–302 form the Helicase ATP-binding domain; that stretch reads IPHLLNGKDV…KLSFEKNEES (176 aa). ATP is bound at residue 140–147; the sequence is AKTGSGKT. A DEAD box motif is present at residues 250–253; the sequence is DEAD. In terms of domain architecture, Helicase C-terminal spans 335-488; sequence RFLVLYAFLK…NKVPNLQSHL (154 aa). The interval 551–590 is disordered; that stretch reads SASKHRRKMRKVDGGRRHGISAANPYGRKGGDDKRQFARF. Basic and acidic residues predominate over residues 579 to 590; it reads KGGDDKRQFARF.

It belongs to the DEAD box helicase family. DDX18/HAS1 subfamily.

The catalysed reaction is ATP + H2O = ADP + phosphate + H(+). The sequence is that of DEAD-box ATP-dependent RNA helicase 27 from Oryza sativa subsp. japonica (Rice).